The chain runs to 153 residues: MIKVGICDTTFARYDMGGAAIDEIKKHATGIKIIRRTVPGIKDLPVACKKLIEEEGCEMVMALGMPGPEEKDKVCAHEASTGLIQAQLMTNTHILEVFVHEDEEDDPEDLKVLADNRAREHAQNLIMMLFRPERLTRDAGMGMREGKPDVGPL.

The protein belongs to the DMRL synthase family. In terms of assembly, homooligomer. Requires Mg(2+) as cofactor.

It catalyses the reaction 2 6,7-dimethyl-8-(1-D-ribityl)lumazine + H(+) = 5-amino-6-(D-ribitylamino)uracil + riboflavin. It participates in cofactor biosynthesis; riboflavin biosynthesis; riboflavin from 2-hydroxy-3-oxobutyl phosphate and 5-amino-6-(D-ribitylamino)uracil: step 2/2. Inhibited by EDTA. In terms of biological role, the relatively low activity of this enzyme suggested that 6,7-dimethyl-8-ribityllumazine might not be its natural substrate. This is Riboflavin synthase (ribC) from Methanothermobacter marburgensis (strain ATCC BAA-927 / DSM 2133 / JCM 14651 / NBRC 100331 / OCM 82 / Marburg) (Methanobacterium thermoautotrophicum).